Here is a 567-residue protein sequence, read N- to C-terminus: Vacuolar fusion protein MON1 homolog (567 aa).

2 disordered regions span residues 1–52 (MDMD…DDEG) and 65–129 (TSAS…DDTS). Over residues 7-19 (TNNPSPPGPPDSP) the composition is skewed to pro residues. The span at 43 to 52 (DDYDDDDDEG) shows a compositional bias: acidic residues.

The protein belongs to the MON1/SAND family. As to quaternary structure, interacts with CCZ1A, CCZ1B and RABF2B.

The protein resides in the endosome. It is found in the prevacuolar compartment. In terms of biological role, plays an important role in membrane trafficking through the secretory apparatus. In complex with CCZ1, acts as a guanine exchange factor (GEF) for Rab7 protein family. Promotes the exchange of GDP to GTP, converting it from an inactive GDP-bound form into an active GTP-bound form. The active form is involved in protein trafficking from prevacuolar compartments (PVCs) to vacuoles. May serve as a linker between Rab5 and Rab7 protein families in PVCs and mediate PVC maturation. This is Vacuolar fusion protein MON1 homolog from Oryza sativa subsp. japonica (Rice).